We begin with the raw amino-acid sequence, 442 residues long: MSAAQGWDRNRRRGGGAAGAGGGGSGAGGGSGGSGGRGTGQLNRFVQLSGRPHLPGKKKIRWDPVRRRFIQSCPIIRIPNRFLRGHRPPPARSGHRCVADNTNLYVFGGYNPDYDESGGPDNEDYPLFRELWRYHFATGVWHQMGTDGYMPRELASMSLVLHGNNLLVFGGTGIPFGESNGNDVHVCNVKYKRWALLSCRGKKPSRIYGQAMAIINGSLYVFGGTTGYIYSTDLHKLDLNTREWTQLKPNNLSCDLPEERYRHEIAHDGQRIYILGGGTSWTAYSLNKIHAYNLETNAWEEIATKPHEKIGFPAARRCHSCVQIKNDVFICGGYNGEVILGDIWKLNLQTFQWVKLPATMPEPVYFHCAAVTPAGCMYIHGGVVNIHENKRTGSLFKIWLVVPSLLELAWEKLLAAFPNLANLSRTQLLHLGLTQGLIERLK.

Residues 1-57 (MSAAQGWDRNRRRGGGAAGAGGGGSGAGGGSGGSGGRGTGQLNRFVQLSGRPHLPGK) form a disordered region. Arg-13 bears the Omega-N-methylarginine mark. Residues 15–39 (GGAAGAGGGGSGAGGGSGGSGGRGT) are compositionally biased toward gly residues. 6 Kelch repeats span residues 87–154 (RPPP…PREL), 155–198 (ASMS…ALLS), 199–260 (CRGK…PEER), 261–319 (YRHE…RRCH), 320–364 (SCVQ…PEPV), and 365–403 (YFHCAAVTPAGCMYIHGGVVNIHENKRTGSLFKIWLVVP). The interval 401-442 (VVPSLLELAWEKLLAAFPNLANLSRTQLLHLGLTQGLIERLK) is interaction with CUL2.

This sequence belongs to the KLHDC10 family. In terms of assembly, component of a CRL2 E3 ubiquitin-protein ligase complex, also named ECS (Elongin BC-CUL2/5-SOCS-box protein) complex, composed of CUL2, Elongin BC (ELOB and ELOC), RBX1 and substrate-specific adapter KLHDC10. Interacts (via the 6 Kelch repeats) with PPP5C.

It localises to the nucleus. Its subcellular location is the cytoplasm. The protein operates within protein modification; protein ubiquitination. Functionally, substrate-recognition component of a Cul2-RING (CRL2) E3 ubiquitin-protein ligase complex of the DesCEND (destruction via C-end degrons) pathway, which recognizes a C-degron located at the extreme C-terminus of target proteins, leading to their ubiquitination and degradation. The C-degron recognized by the DesCEND pathway is usually a motif of less than ten residues and can be present in full-length proteins, truncated proteins or proteolytically cleaved forms. The CRL2(KLHDC10) complex specifically recognizes proteins with a proline-glycine (Pro-Gly) or an alanine tail (CAT tail) at the C-terminus, leading to their ubiquitination and degradation. The CRL2(KLHDC10) complex is involved in the ribosome-associated quality control (RQC) pathway, which mediates the extraction of incompletely synthesized nascent chains from stalled ribosomes: CRL2(KLHDC10) acts downstream of NEMF and recognizes CAT tails associated with stalled nascent chains, leading to their ubiquitination and degradation. Participates in the oxidative stress-induced cell death through MAP3K5 activation. Inhibits PPP5C phosphatase activity on MAP3K5. Acts as a regulator of necroptosis. The sequence is that of Kelch domain-containing protein 10 from Homo sapiens (Human).